Consider the following 431-residue polypeptide: Enolase (431 aa).

Gln167 is a (2R)-2-phosphoglycerate binding site. Glu209 acts as the Proton donor in catalysis. Residues Asp246, Glu289, and Asp316 each coordinate Mg(2+). (2R)-2-phosphoglycerate-binding residues include Lys341, Arg370, Ser371, and Lys392. Lys341 serves as the catalytic Proton acceptor.

It belongs to the enolase family. As to quaternary structure, component of the RNA degradosome, a multiprotein complex involved in RNA processing and mRNA degradation. Mg(2+) serves as cofactor.

The protein resides in the cytoplasm. It is found in the secreted. The protein localises to the cell surface. The catalysed reaction is (2R)-2-phosphoglycerate = phosphoenolpyruvate + H2O. The protein operates within carbohydrate degradation; glycolysis; pyruvate from D-glyceraldehyde 3-phosphate: step 4/5. In terms of biological role, catalyzes the reversible conversion of 2-phosphoglycerate (2-PG) into phosphoenolpyruvate (PEP). It is essential for the degradation of carbohydrates via glycolysis. The chain is Enolase from Shewanella denitrificans (strain OS217 / ATCC BAA-1090 / DSM 15013).